Consider the following 482-residue polypeptide: UDP-glucose 6-dehydrogenase 2 (482 aa).

Residues 8 to 13 (GAGYVG), Asp33, Arg38, 86 to 90 (VNTPT), 127 to 128 (ST), and Glu163 each bind NAD(+). Residues 159–163 (EFLAE), 218–225 (KLAANAFL), and 258–271 (RIGP…VGFG) each bind substrate. Cys274 serves as the catalytic Nucleophile. Position 274-277 (274-277 (CFQK)) interacts with NAD(+). 336–337 (FK) provides a ligand contact to substrate. Arg344 provides a ligand contact to NAD(+). Ser395 bears the Phosphoserine mark. Position 449 (Arg449) interacts with substrate.

It belongs to the UDP-glucose/GDP-mannose dehydrogenase family.

The catalysed reaction is UDP-alpha-D-glucose + 2 NAD(+) + H2O = UDP-alpha-D-glucuronate + 2 NADH + 3 H(+). Its pathway is nucleotide-sugar biosynthesis; UDP-alpha-D-glucuronate biosynthesis; UDP-alpha-D-glucuronate from UDP-alpha-D-glucose: step 1/1. Functionally, involved in the biosynthesis of UDP-glucuronic acid (UDP-GlcA), providing nucleotide sugars for cell-wall polymers. The chain is UDP-glucose 6-dehydrogenase 2 (UGD2) from Oryza sativa subsp. japonica (Rice).